The following is a 408-amino-acid chain: Aspartate aminotransferase, cytoplasmic (408 aa).

L-aspartate-binding residues include Gly36, Trp133, and Asn187. N6-(pyridoxal phosphate)lysine is present on Lys251. Arg379 provides a ligand contact to L-aspartate.

Belongs to the class-I pyridoxal-phosphate-dependent aminotransferase family. Homodimer. Pyridoxal 5'-phosphate serves as cofactor. Expressed in all somatic tissues including the nervous system.

Its subcellular location is the cytoplasm. It carries out the reaction L-aspartate + 2-oxoglutarate = oxaloacetate + L-glutamate. In terms of biological role, biosynthesis of L-glutamate from L-aspartate. Important regulator of levels of glutamate, the major excitatory neurotransmitter of the central nervous system. This is Aspartate aminotransferase, cytoplasmic from Caenorhabditis elegans.